The following is an 898-amino-acid chain: Dipeptidyl peptidase 8 (898 aa).

Active-site charge relay system residues include S755, D833, and H865.

Belongs to the peptidase S9B family. DPPIV subfamily. As to quaternary structure, homodimer. Forms a ternary complex with NLRP1, composed of a DPP8 homodimer, one full-length NLRP1 protein, and one cleaved C-terminus of NLRP1 (NACHT, LRR and PYD domains-containing protein 1, C-terminus). Forms a ternary complex with CARD8, composed of a DPP8 homodimer, one full-length NLRP1 protein, and one cleaved C-terminus of CARD8 (Caspase recruitment domain-containing protein 8, C-terminus). In the ternary complex, only one subunit of the DPP8 homodimer is bound to NLRP1 or CARD8. As to expression, ubiquitously expressed, with highest levels in testis, placenta, prostate, muscle and brain.

The protein localises to the cytoplasm. It carries out the reaction Release of an N-terminal dipeptide, Xaa-Yaa-|-Zaa-, from a polypeptide, preferentially when Yaa is Pro, provided Zaa is neither Pro nor hydroxyproline.. Inhibited by zinc. Inhibited by the serine proteinase inhibitor 4-(2-aminoethyl)benzenesulphonyl fluoride (AEBSF), and by di-isopropylfluorophosphate. Specifically inhibited by isoindoline derivatives. Inhibited by Val-boroPro (Talabostat, PT-100), a non-selective inhibitor, which triggers pyroptosis in monocytes and macrophages. Dipeptidyl peptidase that cleaves off N-terminal dipeptides from proteins having a Pro or Ala residue at position 2. Acts as a key inhibitor of caspase-1-dependent monocyte and macrophage pyroptosis in resting cells by preventing activation of NLRP1 and CARD8. Sequesters the cleaved C-terminal part of NLRP1 and CARD8, which respectively constitute the active part of the NLRP1 and CARD8 inflammasomes, in a ternary complex, thereby preventing their oligomerization and activation. The dipeptidyl peptidase activity is required to suppress NLRP1 and CARD8; however, neither NLRP1 nor CARD8 are bona fide substrates of DPP8, suggesting the existence of substrate(s) required for NLRP1 and CARD8 inhibition. This chain is Dipeptidyl peptidase 8, found in Homo sapiens (Human).